We begin with the raw amino-acid sequence, 331 residues long: Homoserine O-succinyltransferase (331 aa).

Residue C141 is the Acyl-thioester intermediate of the active site. Substrate is bound by residues K162 and S190. The Proton acceptor role is filled by H233. E235 is an active-site residue. R247 lines the substrate pocket.

This sequence belongs to the MetA family.

The protein localises to the cytoplasm. It carries out the reaction L-homoserine + succinyl-CoA = O-succinyl-L-homoserine + CoA. It participates in amino-acid biosynthesis; L-methionine biosynthesis via de novo pathway; O-succinyl-L-homoserine from L-homoserine: step 1/1. In terms of biological role, transfers a succinyl group from succinyl-CoA to L-homoserine, forming succinyl-L-homoserine. In Methylorubrum extorquens (strain DSM 6343 / CIP 106787 / DM4) (Methylobacterium extorquens), this protein is Homoserine O-succinyltransferase.